The primary structure comprises 381 residues: Homoserine O-succinyltransferase (381 aa).

In terms of domain architecture, AB hydrolase-1 spans 45 to 360 (NAVLVCHALN…PHGHDAFLLD (316 aa)). The active-site Nucleophile is the Ser-151. A substrate-binding site is contributed by Arg-221. Active-site residues include Asp-321 and His-354. Asp-355 is a substrate binding site.

It belongs to the AB hydrolase superfamily. MetX family. In terms of assembly, homodimer.

It localises to the cytoplasm. It catalyses the reaction L-homoserine + succinyl-CoA = O-succinyl-L-homoserine + CoA. Its pathway is amino-acid biosynthesis; L-methionine biosynthesis via de novo pathway; O-succinyl-L-homoserine from L-homoserine: step 1/1. Transfers a succinyl group from succinyl-CoA to L-homoserine, forming succinyl-L-homoserine. This chain is Homoserine O-succinyltransferase, found in Burkholderia mallei (strain NCTC 10247).